The chain runs to 235 residues: Ribosomal RNA small subunit methyltransferase G (235 aa).

Residues G74, F79, 97–99 (EAT), 125–126 (AE), and R144 contribute to the S-adenosyl-L-methionine site.

Belongs to the methyltransferase superfamily. RNA methyltransferase RsmG family.

Its subcellular location is the cytoplasm. Specifically methylates the N7 position of a guanine in 16S rRNA. In Dehalococcoides mccartyi (strain ATCC BAA-2100 / JCM 16839 / KCTC 5957 / BAV1), this protein is Ribosomal RNA small subunit methyltransferase G.